The primary structure comprises 106 residues: uncharacterized protein (106 aa).

3 consecutive transmembrane segments (helical) span residues 4 to 24 (LPVV…IGFL), 27 to 47 (MLLR…LFII), and 78 to 98 (VLIL…INML).

It localises to the cell membrane. This is an uncharacterized protein from Bacillus subtilis (strain 168).